A 423-amino-acid polypeptide reads, in one-letter code: COP9 signalosome complex subunit 3 (423 aa).

One can recognise a PCI domain in the interval Asn197–Glu365. Residues Gln402 to Ser423 form a disordered region.

The protein belongs to the CSN3 family. Component of the CSN complex, probably composed of cops1, cops2, cops3, cops4, cops5, cops6, cops7, cops8 and cops9.

The protein localises to the cytoplasm. Its subcellular location is the nucleus. In terms of biological role, component of the COP9 signalosome complex (CSN), a complex involved in various cellular and developmental processes. The CSN complex is an essential regulator of the ubiquitin (Ubl) conjugation pathway by mediating the deneddylation of the cullin subunits of E3 ligase complexes, leading to modify the Ubl ligase activity. The protein is COP9 signalosome complex subunit 3 (cops3) of Danio rerio (Zebrafish).